A 217-amino-acid chain; its full sequence is Peptide methionine sulfoxide reductase MsrA (217 aa).

The active site involves C56.

The protein belongs to the MsrA Met sulfoxide reductase family.

The catalysed reaction is L-methionyl-[protein] + [thioredoxin]-disulfide + H2O = L-methionyl-(S)-S-oxide-[protein] + [thioredoxin]-dithiol. It carries out the reaction [thioredoxin]-disulfide + L-methionine + H2O = L-methionine (S)-S-oxide + [thioredoxin]-dithiol. Has an important function as a repair enzyme for proteins that have been inactivated by oxidation. Catalyzes the reversible oxidation-reduction of methionine sulfoxide in proteins to methionine. This is Peptide methionine sulfoxide reductase MsrA from Corynebacterium glutamicum (strain ATCC 13032 / DSM 20300 / JCM 1318 / BCRC 11384 / CCUG 27702 / LMG 3730 / NBRC 12168 / NCIMB 10025 / NRRL B-2784 / 534).